The chain runs to 679 residues: tRNA uridine 5-carboxymethylaminomethyl modification enzyme MnmG (679 aa).

15–20 (GAGHAG) is an FAD binding site. NAD(+) is bound at residue 314–328 (GPRYCPSIEDKIVRF).

This sequence belongs to the MnmG family. As to quaternary structure, homodimer. Heterotetramer of two MnmE and two MnmG subunits. It depends on FAD as a cofactor.

Its subcellular location is the cytoplasm. Its function is as follows. NAD-binding protein involved in the addition of a carboxymethylaminomethyl (cmnm) group at the wobble position (U34) of certain tRNAs, forming tRNA-cmnm(5)s(2)U34. The chain is tRNA uridine 5-carboxymethylaminomethyl modification enzyme MnmG from Roseiflexus sp. (strain RS-1).